A 510-amino-acid polypeptide reads, in one-letter code: Peptide transporter imqJ (510 aa).

3 helical membrane-spanning segments follow: residues 1-21 (MVNQ…AVVA), 31-51 (IIFS…SSLP), and 57-77 (GISL…TGGI). Asparagine 80 carries an N-linked (GlcNAc...) asparagine glycan. The next 4 membrane-spanning stretches (helical) occupy residues 116 to 136 (IFTT…LITI), 143 to 163 (FSAA…IVLV), 231 to 251 (IFIL…NFIS), and 269 to 289 (IDPI…FPFL). The 121-residue stretch at 348–468 (PAASEIRLLY…RCSSVFFFKA (121 aa)) folds into the Fe2OG dioxygenase domain. 2 residues coordinate Fe cation: histidine 377 and aspartate 379. A glycan (N-linked (GlcNAc...) asparagine) is linked at asparagine 421. Residue histidine 439 participates in Fe cation binding. Arginine 459 contributes to the 2-oxoglutarate binding site.

It belongs to the major facilitator superfamily. Proton-dependent oligopeptide transporter (POT/PTR) (TC 2.A.17) family.

It is found in the membrane. Peptide transporter; part of the gene cluster that mediates the biosynthesis of imizoquins A to D, tripeptide-derived alkaloids that serve a protective role against oxidative stress that are essential for normal germination. The polypeptide is Peptide transporter imqJ (Aspergillus flavus (strain ATCC 200026 / FGSC A1120 / IAM 13836 / NRRL 3357 / JCM 12722 / SRRC 167)).